The chain runs to 511 residues: GMP synthase [glutamine-hydrolyzing] (511 aa).

Residues 3 to 193 (KILILDFGGQ…VYSICDVAGD (191 aa)) form the Glutamine amidotransferase type-1 domain. The active-site Nucleophile is cysteine 80. Active-site residues include histidine 167 and glutamate 169. Positions 194-384 (WEPKNIKLEK…LDIPYQNVYR (191 aa)) constitute a GMPS ATP-PPase domain. 221-227 (SGGVDSL) contacts ATP.

As to quaternary structure, homodimer.

The enzyme catalyses XMP + L-glutamine + ATP + H2O = GMP + L-glutamate + AMP + diphosphate + 2 H(+). Its pathway is purine metabolism; GMP biosynthesis; GMP from XMP (L-Gln route): step 1/1. In terms of biological role, catalyzes the synthesis of GMP from XMP. The chain is GMP synthase [glutamine-hydrolyzing] from Malacoplasma penetrans (strain HF-2) (Mycoplasma penetrans).